The following is a 94-amino-acid chain: Secretoglobin family 1C member 1 (94 aa).

Positions 1–22 are cleaved as a signal peptide; the sequence is MKGSSALLVALTVLCICGLTRA.

Belongs to the secretoglobin family. Expressed in the olfactory mucosa.

Its subcellular location is the secreted. In Rattus norvegicus (Rat), this protein is Secretoglobin family 1C member 1 (Scgb1c1).